The chain runs to 569 residues: Cationic amino acid transporter 5 (569 aa).

The Cytoplasmic segment spans residues 1-67; the sequence is MEGEERGYWR…KQSEHEMKRC (67 aa). A helical membrane pass occupies residues 68–88; that stretch reads LTWWDLVWFGFGSVIGAGIFV. Over 89 to 97 the chain is Extracellular; that stretch reads LTGQEAHEQ. The helical transmembrane segment at 98-118 threads the bilayer; it reads AGPAIVLSYVVSGLSAMLSVF. Residues 119 to 143 are Cytoplasmic-facing; the sequence is CYTEFAVEIPVAGGSFAYLRIELGD. A helical membrane pass occupies residues 144-164; sequence FAAFITAGNILLESIVGTAAV. The Extracellular portion of the chain corresponds to 165 to 192; it reads ARAWTSYFATLLNRSPNALRIKTDLSSG. Residues 193-213 form a helical membrane-spanning segment; the sequence is FNLLDPIAVVVIAASATIASI. The Cytoplasmic portion of the chain corresponds to 214–222; the sequence is STRKTSLLN. The chain crosses the membrane as a helical span at residues 223 to 243; that stretch reads WIASAINTLVIFFVIIAGFIH. Topologically, residues 244–251 are extracellular; that stretch reads ADTSNLTP. The helical transmembrane segment at 252–272 threads the bilayer; sequence FLPFGPEGVFRAAAVVYFAYG. Residues 273–290 are Cytoplasmic-facing; sequence GFDSIATMAEETKNPSRD. Residues 291-311 traverse the membrane as a helical segment; it reads IPIGLLGSMSIITVIYCLMAL. At 312–341 the chain is on the extracellular side; that stretch reads SLSMMQKYTDIDPNAAYSVAFQSVGMKWGK. Residues 342–362 traverse the membrane as a helical segment; that stretch reads YLVALGALKGMTTVLLVGALG. At 363–389 the chain is on the cytoplasmic side; sequence QARYVTHIARTHMIPPIFALVHPKTGT. A helical transmembrane segment spans residues 390–410; that stretch reads PINANLLVAIPSALIAFFSGL. Residue aspartate 411 is a topological domain, extracellular. Residues 412–432 traverse the membrane as a helical segment; it reads VLASLLSISTLFIFTMMPIAL. The Cytoplasmic segment spans residues 433–450; the sequence is LVRRYYVRQDTPRVHLIK. A helical transmembrane segment spans residues 451–471; sequence LITCLLFVVVSSMGTSAYWGM. The Extracellular portion of the chain corresponds to 472–477; it reads QRKGSW. A helical membrane pass occupies residues 478–498; it reads IGYTVTVPFWFLGTLGIVFFV. Topologically, residues 499–505 are cytoplasmic; that stretch reads PQQRTPK. A helical transmembrane segment spans residues 506 to 526; the sequence is VWGVPLVPWLPCLSIATNIFL. Residues 527–537 are Extracellular-facing; the sequence is MGSLGAMAFVR. Residues 538–558 traverse the membrane as a helical segment; sequence FGVCTLAMLLYYFLLGLHATF. Topologically, residues 559 to 569 are cytoplasmic; sequence DMAHQQIVPRT.

This sequence belongs to the amino acid-polyamine-organocation (APC) superfamily. Cationic amino acid transporter (CAT) (TC 2.A.3.3) family. In terms of tissue distribution, expressed in roots, stems, flowers, seeds, and leaves. Mostly present in leaf rims and cotyledons of developing seedlings.

It is found in the cell membrane. High-affinity permease involved in the transport of the cationic amino acids (e.g. arginine, and, to a lower extent, citrulline and glutamate). Transport mostly basic amino acids, and, to a lower extent neutral and acidic amino acids. In Arabidopsis thaliana (Mouse-ear cress), this protein is Cationic amino acid transporter 5 (CAT5).